The sequence spans 118 residues: MARIAGINIPDHKHAVIALTAIYGIGKTRSKAILADLGIAESVKISELTEEQIDQLRDGVAKYTVEGDLRREVSMNIKRLMDLGCYRGLRHRRSLPLRGQRTKTNARTRKGPRKPIKK.

Residues 94–118 are disordered; sequence SLPLRGQRTKTNARTRKGPRKPIKK.

It belongs to the universal ribosomal protein uS13 family. Part of the 30S ribosomal subunit. Forms a loose heterodimer with protein S19. Forms two bridges to the 50S subunit in the 70S ribosome.

In terms of biological role, located at the top of the head of the 30S subunit, it contacts several helices of the 16S rRNA. In the 70S ribosome it contacts the 23S rRNA (bridge B1a) and protein L5 of the 50S subunit (bridge B1b), connecting the 2 subunits; these bridges are implicated in subunit movement. Contacts the tRNAs in the A and P-sites. The sequence is that of Small ribosomal subunit protein uS13 from Vibrio cholerae serotype O1 (strain ATCC 39315 / El Tor Inaba N16961).